We begin with the raw amino-acid sequence, 394 residues long: DNA replication and repair protein RecF (394 aa).

ATP is bound at residue 30-37 (GRNGFGKT).

The protein belongs to the RecF family.

It is found in the cytoplasm. In terms of biological role, the RecF protein is involved in DNA metabolism; it is required for DNA replication and normal SOS inducibility. RecF binds preferentially to single-stranded, linear DNA. It also seems to bind ATP. This Corynebacterium glutamicum (strain ATCC 13032 / DSM 20300 / JCM 1318 / BCRC 11384 / CCUG 27702 / LMG 3730 / NBRC 12168 / NCIMB 10025 / NRRL B-2784 / 534) protein is DNA replication and repair protein RecF.